We begin with the raw amino-acid sequence, 2763 residues long: Large tegument protein deneddylase (2763 aa).

Residues 1-247 (MDIIPPIAVT…CDTYFTDEQY (247 aa)) form a deubiquitination activity region. One can recognise a Peptidase C76 domain in the interval 12-237 (AGVGSRNQFD…SSAVTLIYGS (226 aa)). Catalysis depends on residues Cys32, Asp168, and His170. Positions 495-523 (LELFINLTILRLTGFVVENGTRTHHGATS) are interaction with inner tegument protein. The disordered stretch occupies residues 2456–2476 (VRPAQPAQPAQPAQPAQTVQP). 5 tandem repeats follow at residues 2458 to 2460 (PAQ), 2461 to 2463 (PAQ), 2464 to 2466 (PAQ), 2467 to 2469 (PAQ), and 2470 to 2472 (PAQ). The tract at residues 2458-2472 (PAQPAQPAQPAQPAQ) is 5 X 3 AA repeats of P-A-Q. The span at 2459-2476 (AQPAQPAQPAQPAQTVQP) shows a compositional bias: low complexity.

This sequence belongs to the herpesviridae large tegument protein family. In terms of assembly, interacts with host CUL1 and CUL4A; these interactions inhibit the E3 ligase activity of cullins. Interacts with inner tegument protein. Interacts with capsid vertex specific component CVC2. Interacts with the major capsid protein/MCP.

The protein resides in the virion tegument. It localises to the host cytoplasm. Its subcellular location is the host nucleus. It carries out the reaction Thiol-dependent hydrolysis of ester, thioester, amide, peptide and isopeptide bonds formed by the C-terminal Gly of ubiquitin (a 76-residue protein attached to proteins as an intracellular targeting signal).. Large tegument protein that plays multiple roles in the viral cycle. During viral entry, remains associated with the capsid while most of the tegument is detached and participates in the capsid transport toward the host nucleus. Plays a role in the routing of the capsid at the nuclear pore complex and subsequent uncoating. Within the host nucleus, acts as a deneddylase and promotes the degradation of nuclear CRLs (cullin-RING ubiquitin ligases) and thereby stabilizes nuclear CRL substrates, while cytoplasmic CRLs remain unaffected. These modifications prevent host cell cycle S-phase progression and create a favorable environment allowing efficient viral genome replication. Participates later in the secondary envelopment of capsids. Indeed, plays a linker role for the association of the outer viral tegument to the capsids together with the inner tegument protein. This Homo sapiens (Human) protein is Large tegument protein deneddylase.